A 195-amino-acid chain; its full sequence is Biogenesis of lysosome-related organelles complex 1 subunit 3 (195 aa).

The span at 1–11 shows a compositional bias: basic residues; the sequence is MESSQGRRRRP. Residues 1 to 72 form a disordered region; the sequence is MESSQGRRRR…PEPEPTVVPV (72 aa). Residues 25 to 51 show a composition bias toward low complexity; it reads ELSASSSEEELYLGPSGPTRGRPTGLR. Threonine 59 is modified (phosphothreonine). Residue serine 61 is modified to Phosphoserine.

This sequence belongs to the BLOC1S3 family. As to quaternary structure, octamer composed of one copy each BLOC1S1, BLOC1S2, BLOC1S3, BLOC1S4, BLOC1S5, BLOC1S6, DTNBP1/BLOC1S7 and SNAPIN/BLOC1S8. Interacts directly with BLOC1S2. Component of the biogenesis of lysosome-related organelles complex 1 (BLOC-1) composed of BLOC1S1, BLOC1S2, BLOC1S3, BLOC1S4, BLOC1S5, BLOC1S6, DTNBP1/BLOC1S7 and SNAPIN/BLOC1S8. The BLOC-1 complex associates with the AP-3 protein complex and membrane protein cargos. Interacts with BLOC1S4, BLOC1S5 and BLOC1S6. Phosphorylated. Ubiquitously expressed.

It is found in the cytoplasm. Component of the BLOC-1 complex, a complex that is required for normal biogenesis of lysosome-related organelles (LRO), such as platelet dense granules and melanosomes. In concert with the AP-3 complex, the BLOC-1 complex is required to target membrane protein cargos into vesicles assembled at cell bodies for delivery into neurites and nerve terminals. The BLOC-1 complex, in association with SNARE proteins, is also proposed to be involved in neurite extension. Plays a role in intracellular vesicle trafficking. The protein is Biogenesis of lysosome-related organelles complex 1 subunit 3 (Bloc1s3) of Mus musculus (Mouse).